The following is a 232-amino-acid chain: MKELQTVLKNHFAIEFADKKLLETAFTHTSYANEHRLLKISHNERLEFLGDAVLQLLISEYLYKKYPKKPEGDLSKLRAMIVREESLAGFARDCQFDQFIKLGKGEEKSGGRNRDTILGDAFEAFLGALLLDKDVAKVKEFIYQVMIPKVEAGEFEMITDYKTHLQELLQVNGDVAIRYQVISETGPAHDKVFDVEVLVEGKSIGQGQGRSKKLAEQEAAKNAVEKGLDSCI.

The region spanning 5-134 (QTVLKNHFAI…FLGALLLDKD (130 aa)) is the RNase III domain. E47 serves as a coordination point for Mg(2+). D51 is an active-site residue. Mg(2+)-binding residues include D120 and E123. E123 is an active-site residue. One can recognise a DRBM domain in the interval 160-229 (DYKTHLQELL…AKNAVEKGLD (70 aa)).

The protein belongs to the ribonuclease III family. Homodimer. Requires Mg(2+) as cofactor.

Its subcellular location is the cytoplasm. It catalyses the reaction Endonucleolytic cleavage to 5'-phosphomonoester.. Digests double-stranded RNA. Involved in the processing of primary rRNA transcript to yield the immediate precursors to the large and small rRNAs (23S and 16S). Processes some mRNAs, and tRNAs when they are encoded in the rRNA operon. Processes pre-crRNA and tracrRNA of type II CRISPR loci if present in the organism. This is Ribonuclease 3 from Streptococcus pneumoniae serotype 4 (strain ATCC BAA-334 / TIGR4).